The following is a 998-amino-acid chain: Protein Smaug (998 aa).

Positions 1-37 (MKYATGTDNAMTSGISGQTNNSNSASNEMQPTTSTPT) are enriched in polar residues. Disordered stretches follow at residues 1–45 (MKYA…EATS), 50–69 (TATYANGNPNPSANPSQSQP), and 329–370 (LCPA…GSSS). A compositionally biased stretch (low complexity) spans 329–338 (LCPASGSRSS). Phosphoserine occurs at positions 564 and 575. The interval 583-763 (EFKPNYIKFH…KDLKFKLSKM (181 aa)) is interaction with cup. An SAM domain is found at 600–654 (GIGLWLKSLRLHKYIELFKNMTYEEMLLITEDFLQSVGVTKGASHKLALCIDKLK). Disordered regions lie at residues 773 to 892 (HVKP…MQQM) and 942 to 977 (NNGSNDNLGLERNQQPQQQQQRKLSGGVSSAEQQPK). 2 stretches are compositionally biased toward polar residues: residues 801-822 (KSGSNDRINNRKNSNDMLNFSL) and 854-864 (HQPQYKSSSYP). Serine 971 carries the post-translational modification Phosphoserine.

Belongs to the SMAUG family. In terms of assembly, interacts with oskar (osk). Binds to the 3'-UTR of nos. Interacts with cup, which in turn recruits eIF4-E, leading to an indirect interaction between smg and eIF4-E that prevents mRNA translation.

It is found in the cytoplasm. Translation regulator that binds to the 3'-UTR of specific mRNAs such as nanos (nos) and prevent their translation. Prevents translation of unlocalized nos in the bulk cytoplasm via the recruitment of cup. The polypeptide is Protein Smaug (Drosophila simulans (Fruit fly)).